The following is a 33-amino-acid chain: Dolabellanin-B2 (33 aa).

Contains two disulfide bonds. In terms of processing, up to two of the methionines may be oxidized to methionine sulfoxides.

It is found in the secreted. Functionally, has antibacterial activity against Gram-negative bacteria E.coli JM109 and DH5-alpha, H.influenza IID 983, and V.vulnificus RIMD 2219009. Has antibacterial activity against Gram-positive bacteria S.aureus IID 1677, B.subtilis RIMD 0225014 and L.monocytogenes VIU206. Possesses antifungal activity against S.cerevisiae A581A, S.pombe IFO 1628, C.albicans ATCC 36232 and TIMM-1623, and C.tropicalis TIMM-0313. This is Dolabellanin-B2 from Dolabella auricularia (Shoulderblade sea cat).